The chain runs to 504 residues: TGF-beta-activated kinase 1 and MAP3K7-binding protein 1 (504 aa).

Residues 1–22 (MAAQRRSLLQSEQQPSWTDDLP) form a disordered region. At Ser-7 the chain carries Phosphoserine. Positions 7 to 17 (SLLQSEQQPSW) are enriched in polar residues. The region spanning 28-365 (GVGSASNRSY…EDMTLLVRNF (338 aa)) is the PPM-type phosphatase domain. Residue Ser-378 is modified to Phosphoserine. Ser-395 carries O-linked (GlcNAc) serine glycosylation. Position 423 is a phosphoserine; by MAPK14 (Ser-423). Residues 430-439 (ATPTLTNQSP) are compositionally biased toward polar residues. A disordered region spans residues 430 to 478 (ATPTLTNQSPTLTLQSTNTHTQSSSSSSDGGLFRSRPAHSLPPGEDGRV). Position 431 is a phosphothreonine; by MAPK14 (Thr-431). Ser-438 is subject to Phosphoserine; by MAPK14. Positions 440-457 (TLTLQSTNTHTQSSSSSS) are enriched in low complexity. Thr-442 is subject to Phosphothreonine.

In terms of assembly, interacts with XIAP and BIRC7. Interacts with TRAF6 and MAP3K7; during IL-1 signaling. Identified in the TRIKA2 complex composed of MAP3K7, TAB1 and TAB2. Interacts with TRAF6 and MAPK14; these interactions allow MAPK14 autophosphorylation. Interacts with STING1; interaction takes place following cGAMP activation and promotes TAB1 recruitment to the endoplasmic reticulum, triggering MAP3K7/TAK1 activation and STING1 phosphorylation. Phosphorylated at all three sites Ser-423, Thr-431 and Ser-438 by MAPK14 when cells were exposed to cellular stresses, or stimulated with TNF-alpha, IL1 or LPS. These phosphorylations inhibit TAK1 activation by a feedback control mechanism. Dephosphorylated by DUSP14 at Ser-438, leading to TAB1-MAP3K7/TAK1 complex inactivation in T-cells. In terms of processing, ubiquitinated by MAP3K1 with 'Lys-63'-linked polyubiquitin; leading to activation of TAK1 and of JNK and p38 MAP kinases following EGF and TGF-beta stimulation. Ubiquitinated by ITCH with 'Lys-48'-linked polyubiquitin; leading to proteasomal degradation. Ubiquitinated by RNF114 during maternal-to-zygotic transition; leading to degradation. Post-translationally, (Microbial infection) Deubiquitinated by Y.enterocolitica YopP. O-GlcNAcylated at Ser-395 by OGT is required for full MAP3K7/TAK1 activation upon stimulation with IL-1 or osmotic stress. Deglycosylated at Ser-395 by OGA. In terms of tissue distribution, ubiquitous.

The protein resides in the cytoplasm. It localises to the cytosol. Its subcellular location is the endoplasmic reticulum membrane. Functionally, key adapter protein that plays an essential role in JNK and NF-kappa-B activation and proinflammatory cytokines production in response to stimulation with TLRs and cytokines. Mechanistically, associates with the catalytic domain of MAP3K7/TAK1 to trigger MAP3K7/TAK1 autophosphorylation leading to its full activation. Similarly, associates with MAPK14 and triggers its autophosphorylation and subsequent activation. In turn, MAPK14 phosphorylates TAB1 and inhibits MAP3K7/TAK1 activation in a feedback control mechanism. Also plays a role in recruiting MAPK14 to the TAK1 complex for the phosphorylation of the TAB2 and TAB3 regulatory subunits. This Homo sapiens (Human) protein is TGF-beta-activated kinase 1 and MAP3K7-binding protein 1 (TAB1).